A 160-amino-acid chain; its full sequence is Glucan endo-1,3-beta-glucosidase, acidic isoform PR-O (160 aa).

The Nucleophile role is filled by glutamate 81.

Belongs to the glycosyl hydrolase 17 family. The N-terminus is blocked.

The protein resides in the secreted. It localises to the extracellular space. The enzyme catalyses Hydrolysis of (1-&gt;3)-beta-D-glucosidic linkages in (1-&gt;3)-beta-D-glucans.. Implicated in the defense of plants against pathogens. This is Glucan endo-1,3-beta-glucosidase, acidic isoform PR-O (PR0) from Nicotiana tabacum (Common tobacco).